A 237-amino-acid polypeptide reads, in one-letter code: Anti-FlhC(2)FlhD(4) factor YdiV (237 aa).

Positions 1-237 (MIASLDELYH…VSQLIKLVQR (237 aa)) constitute an EAL domain.

The protein belongs to the YdiV family. Interacts with FlhD in the FlhC(2)FlhD(4) heterohexamer, inhibiting its ability to activate transcription.

Functionally, acts as an anti-FlhC(2)FlhD(4) factor by binding to FlhD, decreasing its ability to bind DNA, and thus negatively regulates expression of flagellar class II operons, decreasing motility in nutrient-poor medium. Required for resistance to host phagocyte oxidase. The sequence is that of Anti-FlhC(2)FlhD(4) factor YdiV (ydiV) from Salmonella typhi.